Reading from the N-terminus, the 481-residue chain is Phosphoglycerate kinase 1, chloroplastic (481 aa).

The N-terminal 75 residues, methionine 1–valine 75, are a transit peptide targeting the chloroplast. The residue at position 81 (serine 81) is a Phosphoserine. Alanine 99, aspartate 100, asparagine 102, arginine 116, threonine 138, histidine 139, glycine 141, arginine 142, arginine 197, histidine 229, and arginine 230 together coordinate (2R)-3-phosphoglycerate. Glycine 275 is a binding site for ADP. Glycine 275 lines the CDP pocket. AMP-binding residues include lysine 277 and lysine 281. Lysine 281 is a binding site for ATP. Position 299 (glycine 299) interacts with ADP. Glycine 299 lines the CDP pocket. Residues glycine 300 and glycine 372 each coordinate AMP. Residues glycine 300 and glycine 372 each contribute to the ATP site. Residues glycine 397 and phenylalanine 402 each coordinate CDP. An ADP-binding site is contributed by phenylalanine 402. AMP is bound at residue glutamate 403. Positions 403, 434, and 435 each coordinate ATP. Position 434 (aspartate 434) interacts with Mg(2+).

It belongs to the phosphoglycerate kinase family. In terms of assembly, monomer. Binds to FTSZ2-1 and FTSZ2-2. It depends on Mg(2+) as a cofactor.

It localises to the plastid. Its subcellular location is the chloroplast. It catalyses the reaction (2R)-3-phosphoglycerate + ATP = (2R)-3-phospho-glyceroyl phosphate + ADP. It participates in carbohydrate biosynthesis; Calvin cycle. Functionally, may trigger the phosphorylation of FTSZ2-1 and FTSZ2-2. This Arabidopsis thaliana (Mouse-ear cress) protein is Phosphoglycerate kinase 1, chloroplastic.